The primary structure comprises 196 residues: Imidazoleglycerol-phosphate dehydratase (196 aa).

Belongs to the imidazoleglycerol-phosphate dehydratase family.

The protein resides in the cytoplasm. It catalyses the reaction D-erythro-1-(imidazol-4-yl)glycerol 3-phosphate = 3-(imidazol-4-yl)-2-oxopropyl phosphate + H2O. It functions in the pathway amino-acid biosynthesis; L-histidine biosynthesis; L-histidine from 5-phospho-alpha-D-ribose 1-diphosphate: step 6/9. The sequence is that of Imidazoleglycerol-phosphate dehydratase from Dehalococcoides mccartyi (strain CBDB1).